A 480-amino-acid polypeptide reads, in one-letter code: DNA repair protein RadA (480 aa).

Residues 10–27 form a C4-type zinc finger; that stretch reads CSECRHVSAKWVGRCLEC. 95–102 provides a ligand contact to ATP; it reads GDPGVGKS. The short motif at 254–258 is the RadA KNRFG motif element; it reads KNRFG. Residues 353-480 form a lon-protease-like region; the sequence is DIYLSTVGGM…TGHVPLGRGT (128 aa). Positions 459 to 480 are disordered; sequence GTTLATPPSHSGTGHVPLGRGT. A compositionally biased stretch (polar residues) spans 461–470; it reads TLATPPSHSG.

The protein belongs to the RecA family. RadA subfamily.

DNA-dependent ATPase involved in processing of recombination intermediates, plays a role in repairing DNA breaks. Stimulates the branch migration of RecA-mediated strand transfer reactions, allowing the 3' invading strand to extend heteroduplex DNA faster. Binds ssDNA in the presence of ADP but not other nucleotides, has ATPase activity that is stimulated by ssDNA and various branched DNA structures, but inhibited by SSB. Does not have RecA's homology-searching function. The protein is DNA repair protein RadA of Mycobacterium tuberculosis (strain CDC 1551 / Oshkosh).